Consider the following 277-residue polypeptide: Large ribosomal subunit protein uL2 (277 aa).

Disordered regions lie at residues 37 to 60 (KNST…GHKH) and 223 to 264 (VVMN…NKRT). Residues 39 to 49 (STAGRNNNGHI) show a composition bias toward polar residues. The segment covering 50–60 (TTRHKGGGHKH) has biased composition (basic residues). Positions 229-244 (DHPHGGGEGRTGEARE) are enriched in basic and acidic residues.

Belongs to the universal ribosomal protein uL2 family. In terms of assembly, part of the 50S ribosomal subunit. Forms a bridge to the 30S subunit in the 70S ribosome.

One of the primary rRNA binding proteins. Required for association of the 30S and 50S subunits to form the 70S ribosome, for tRNA binding and peptide bond formation. It has been suggested to have peptidyltransferase activity; this is somewhat controversial. Makes several contacts with the 16S rRNA in the 70S ribosome. The protein is Large ribosomal subunit protein uL2 of Neisseria meningitidis serogroup B (strain ATCC BAA-335 / MC58).